We begin with the raw amino-acid sequence, 98 residues long: Small ribosomal subunit protein bS6 (98 aa).

The protein belongs to the bacterial ribosomal protein bS6 family.

Binds together with bS18 to 16S ribosomal RNA. This Lactobacillus johnsonii (strain CNCM I-12250 / La1 / NCC 533) protein is Small ribosomal subunit protein bS6.